The primary structure comprises 602 residues: Sodium- and chloride-dependent GABA transporter 2 (602 aa).

Over 1–40 (MDSRVSGTTSNGETKPVCPGLEKAAEDGALQREQWSNKME) the chain is Cytoplasmic. 3 helical membrane-spanning segments follow: residues 41-61 (FLLS…FPYL), 68-88 (GAFF…VFLL), and 121-141 (IVTL…FYLF). Residues 142–206 (SSFTIDLPWG…GIQHLGALRW (65 aa)) are Extracellular-facing. The cysteines at positions 153 and 162 are disulfide-linked. 2 N-linked (GlcNAc...) asparagine glycosylation sites follow: Asn169 and Asn173. Helical transmembrane passes span 207 to 227 (ELAL…WKGV) and 233 to 253 (VVYF…IRGV). The N-linked (GlcNAc...) asparagine glycan is linked to Asn269. 7 consecutive transmembrane segments (helical) span residues 282-302 (AGTQ…ALGS), 319-339 (FLNS…LGFM), 366-386 (VVML…VVLL), 418-438 (VLIL…LTEG), 453-473 (GMCL…AYGA), 490-510 (PLIK…TFLF), and 528-548 (WWGD…IPAW). The Cytoplasmic portion of the chain corresponds to 549-602 (SCYKLSTLKGSFRERVRQLLCPAKDLPQGHREGPSAPATPRTSLLILTELEPHH). Thr587 carries the post-translational modification Phosphothreonine. At Ser591 the chain carries Phosphoserine.

It belongs to the sodium:neurotransmitter symporter (SNF) (TC 2.A.22) family. SLC6A13 subfamily.

It is found in the cell membrane. Its subcellular location is the basolateral cell membrane. The enzyme catalyses 4-aminobutanoate(out) + chloride(out) + 2 Na(+)(out) = 4-aminobutanoate(in) + chloride(in) + 2 Na(+)(in). The catalysed reaction is taurine(out) + chloride(out) + 2 Na(+)(out) = taurine(in) + chloride(in) + 2 Na(+)(in). It catalyses the reaction beta-alanine(out) + chloride(out) + 2 Na(+)(out) = beta-alanine(in) + chloride(in) + 2 Na(+)(in). It carries out the reaction hypotaurine(out) + chloride(out) + 2 Na(+)(out) = hypotaurine(in) + chloride(in) + 2 Na(+)(in). Mediates sodium- and chloride-dependent transport of gamma-aminobutyric acid (GABA). Can also mediate transport of beta-alanine, taurine and hypotaurine. This Bos taurus (Bovine) protein is Sodium- and chloride-dependent GABA transporter 2 (SLC6A13).